Here is a 257-residue protein sequence, read N- to C-terminus: Ribosome-associated protein quality control protein P2 (257 aa).

The interval 1–74 (MSDIYQHFRK…RAERKRAILF (74 aa)) is N-terminal domain. Positions 87 to 166 (LQAFNVRYAD…EKIDLSDLNI (80 aa)) are central region. The 71-residue stretch at 181–251 (LRLDAVCASM…GKTKKDKWRV (71 aa)) folds into the S4 RNA-binding domain.

As to quaternary structure, in the presence of chloramphenicol (a translation elongation inhibitor), but not erythromycin or lincomycin, associates with 50S ribosomal subunits with or without a tRNA in the P-site. The S4 domain binds in a similar position to RqcP.

Its subcellular location is the cytoplasm. Part of the ribosome quality control system (RQC), a ribosome-associated complex that mediates the extraction of incompletely synthesized nascent chains from stalled ribosomes and their subsequent degradation. RqcH recruits Ala-charged tRNA, and with RqcP directs the elongation of stalled nascent chains on 50S ribosomal subunits, leading to non-templated C-terminal alanine extensions (Ala tail). The Ala tail promotes nascent chain degradation. RqcP2 (YlmH) overexpression can compensate for RqcP's role in Ala tailing during RQC, restoring Ala tail addition to peptides in stalled ribosomes. Overexpression complements a double ssrA-rqcP double deletion, but not an ssrA-rqcH double deletion. Its function is as follows. The majority of tagged protein is associated with tRNA-less 50S subunits, suggesting it might also play a role in late stage 50S subunit biogenesis. The protein is Ribosome-associated protein quality control protein P2 of Bacillus subtilis (strain 168).